A 348-amino-acid polypeptide reads, in one-letter code: UDP-N-acetylglucosamine--N-acetylmuramyl-(pentapeptide) pyrophosphoryl-undecaprenol N-acetylglucosamine transferase (348 aa).

UDP-N-acetyl-alpha-D-glucosamine is bound by residues 11–13 (TGG), asparagine 120, arginine 161, serine 187, and glutamine 281.

This sequence belongs to the glycosyltransferase 28 family. MurG subfamily.

The protein localises to the cell inner membrane. The catalysed reaction is di-trans,octa-cis-undecaprenyl diphospho-N-acetyl-alpha-D-muramoyl-L-alanyl-D-glutamyl-meso-2,6-diaminopimeloyl-D-alanyl-D-alanine + UDP-N-acetyl-alpha-D-glucosamine = di-trans,octa-cis-undecaprenyl diphospho-[N-acetyl-alpha-D-glucosaminyl-(1-&gt;4)]-N-acetyl-alpha-D-muramoyl-L-alanyl-D-glutamyl-meso-2,6-diaminopimeloyl-D-alanyl-D-alanine + UDP + H(+). It participates in cell wall biogenesis; peptidoglycan biosynthesis. In terms of biological role, cell wall formation. Catalyzes the transfer of a GlcNAc subunit on undecaprenyl-pyrophosphoryl-MurNAc-pentapeptide (lipid intermediate I) to form undecaprenyl-pyrophosphoryl-MurNAc-(pentapeptide)GlcNAc (lipid intermediate II). The sequence is that of UDP-N-acetylglucosamine--N-acetylmuramyl-(pentapeptide) pyrophosphoryl-undecaprenol N-acetylglucosamine transferase from Crocosphaera subtropica (strain ATCC 51142 / BH68) (Cyanothece sp. (strain ATCC 51142)).